The primary structure comprises 248 residues: Probable transcriptional regulatory protein M446_6579 (248 aa).

The protein belongs to the TACO1 family.

It is found in the cytoplasm. This Methylobacterium sp. (strain 4-46) protein is Probable transcriptional regulatory protein M446_6579.